A 659-amino-acid polypeptide reads, in one-letter code: Nitrate import ATP-binding protein NrtC (659 aa).

The ABC transporter domain maps to 5 to 239 (LAVDHVHQVF…RPRQRLEMME (235 aa)). 42-49 (GHSGCGKS) contributes to the ATP binding site. Residues 255-278 (QQQRRAKRRAKAAAPAPAVAASQQ) form a linker region. The interval 279 to 659 (KTVRLGFLPG…VAPIPLATSA (381 aa)) is nrtA-like.

It belongs to the ABC transporter superfamily. Nitrate/nitrite/cyanate uptake transporter (NitT) (TC 3.A.1.16) family. As to quaternary structure, the complex is composed of two ATP-binding proteins (NrtC and NrtD), two transmembrane proteins (NrtB) and a solute-binding protein (NrtA).

It is found in the cell inner membrane. The catalysed reaction is nitrate(out) + ATP + H2O = nitrate(in) + ADP + phosphate + H(+). With respect to regulation, transport is inhibited by ammonium. The C-terminal domain of NrtC is involved in the ammonium-promoted inhibition of the nitrate/nitrite transporter. Functionally, part of the ABC transporter complex NrtABCD involved in nitrate uptake. The complex is probably also involved in nitrite transport. Probably responsible for energy coupling to the transport system. The polypeptide is Nitrate import ATP-binding protein NrtC (Synechococcus elongatus (strain ATCC 33912 / PCC 7942 / FACHB-805) (Anacystis nidulans R2)).